The primary structure comprises 222 residues: 7-cyano-7-deazaguanine synthase (222 aa).

7-17 (LSGGLDSSTVL) serves as a coordination point for ATP. 4 residues coordinate Zn(2+): Cys191, Cys199, Cys202, and Cys205.

This sequence belongs to the QueC family. Requires Zn(2+) as cofactor.

The enzyme catalyses 7-carboxy-7-deazaguanine + NH4(+) + ATP = 7-cyano-7-deazaguanine + ADP + phosphate + H2O + H(+). It participates in purine metabolism; 7-cyano-7-deazaguanine biosynthesis. In terms of biological role, catalyzes the ATP-dependent conversion of 7-carboxy-7-deazaguanine (CDG) to 7-cyano-7-deazaguanine (preQ(0)). This Trichodesmium erythraeum (strain IMS101) protein is 7-cyano-7-deazaguanine synthase.